Here is a 617-residue protein sequence, read N- to C-terminus: Bifunctional TH2 protein, mitochondrial (617 aa).

The transit peptide at 1-28 (MRFLFPTRLINNSSLGLLRSPHTTAPIR) directs the protein to the mitochondrion. Asp107 is a binding site for substrate. Cys213 serves as the catalytic Nucleophile. Residues Tyr217 and Tyr244 each contribute to the substrate site. Glu286 acts as the Proton donor in catalysis.

It in the N-terminal section; belongs to the TenA family. The protein in the C-terminal section; belongs to the HAD-like hydrolase superfamily.

It is found in the mitochondrion. The protein localises to the cytoplasm. The catalysed reaction is thiamine phosphate + H2O = thiamine + phosphate. It carries out the reaction 4-amino-5-aminomethyl-2-methylpyrimidine + H2O = 4-amino-5-hydroxymethyl-2-methylpyrimidine + NH4(+). May be involved in the salvage of thiamine breakdown products. This protein has a haloacid dehalogenase family domain fused to its TenA domain. Phosphatase with the highest activity against thiamine monophosphate (ThMP) and, with a lower activity, against thiamine diphosphate (ThDP), flavin mononucleotide, inorganic pyrophosphate, CTP and dATP. Has a thiamine salvage hydrolase activity, but only against 4-amino-5-aminomethyl-2-methylpyrimidine (amino-HMP) and not against N-formylamino-HMP, desthiothiamine, thiamine, ThMP, and ThDP. This chain is Bifunctional TH2 protein, mitochondrial, found in Arabidopsis thaliana (Mouse-ear cress).